The chain runs to 256 residues: uncharacterized protein (256 aa).

The protein belongs to the methyltransferase superfamily.

The protein localises to the cytoplasm. The protein resides in the nucleus. Probable methyltransferase. This is an uncharacterized protein from Schizosaccharomyces pombe (strain 972 / ATCC 24843) (Fission yeast).